A 296-amino-acid chain; its full sequence is 4-hydroxy-tetrahydrodipicolinate synthase (296 aa).

Pyruvate is bound at residue Thr-49. Tyr-137 (proton donor/acceptor) is an active-site residue. The Schiff-base intermediate with substrate role is filled by Lys-166. Ile-208 contacts pyruvate.

The protein belongs to the DapA family. As to quaternary structure, homotetramer; dimer of dimers.

The protein localises to the cytoplasm. The enzyme catalyses L-aspartate 4-semialdehyde + pyruvate = (2S,4S)-4-hydroxy-2,3,4,5-tetrahydrodipicolinate + H2O + H(+). Its pathway is amino-acid biosynthesis; L-lysine biosynthesis via DAP pathway; (S)-tetrahydrodipicolinate from L-aspartate: step 3/4. In terms of biological role, catalyzes the condensation of (S)-aspartate-beta-semialdehyde [(S)-ASA] and pyruvate to 4-hydroxy-tetrahydrodipicolinate (HTPA). This is 4-hydroxy-tetrahydrodipicolinate synthase from Chlorobium limicola (strain DSM 245 / NBRC 103803 / 6330).